The following is a 143-amino-acid chain: Granulocyte-macrophage colony-stimulating factor (143 aa).

The first 17 residues, 1-17, serve as a signal peptide directing secretion; sequence MWLQNLLLLGTVVCSFS. The O-linked (GalNAc...) threonine glycan is linked to threonine 27. Asparagine 44 and asparagine 54 each carry an N-linked (GlcNAc...) asparagine glycan. 2 disulfide bridges follow: cysteine 70–cysteine 112 and cysteine 104–cysteine 137.

This sequence belongs to the GM-CSF family. As to quaternary structure, monomer. The signaling GM-CSF receptor complex is a dodecamer of two head-to-head hexamers of two alpha, two beta, and two ligand subunits.

Its subcellular location is the secreted. Its function is as follows. Cytokine that stimulates the growth and differentiation of hematopoietic precursor cells from various lineages, including granulocytes, macrophages, eosinophils and erythrocytes. The polypeptide is Granulocyte-macrophage colony-stimulating factor (CSF2) (Bos taurus (Bovine)).